The sequence spans 199 residues: V-set and transmembrane domain-containing protein 5 (199 aa).

Residues 1-27 (MRPPRCVGRTQGIPLGLLAFWVATARC) form the signal peptide. The Extracellular segment spans residues 28-146 (LQSQGVSLYI…VSEIRYEDLH (119 aa)). In terms of domain architecture, Ig-like C2-type spans 36-138 (YIPRSAINAT…QSGTILLHVS (103 aa)). 3 N-linked (GlcNAc...) asparagine glycosylation sites follow: Asn-43, Asn-87, and Asn-101. The chain crosses the membrane as a helical span at residues 147–167 (FVAVFFALLAAVAVVLISLMW). Topologically, residues 168 to 199 (VCNQCAYKFQRKRRYKLRESTTEEIEMKDVEC) are cytoplasmic. An important for CDC42-dependent filopodia induction region spans residues 169-185 (CNQCAYKFQRKRRYKLR).

In terms of assembly, can homooligomerize through cis interactions within the same cell membrane. N-glycosylated.

The protein localises to the cell membrane. The protein resides in the cell projection. Its subcellular location is the dendrite. It is found in the axon. In terms of biological role, cell adhesion-like membrane protein of the central nervous system (CNS) which modulates both the position and complexity of central neurons by altering their membrane morphology and dynamics. Involved in the formation of neuronal dendrites and protrusions including dendritic filopodia. In synaptogenesis, regulates synapse formation by altering dendritic spine morphology and actin distribution. Promotes formation of unstable neuronal spines such as thin and branched types. Regulates neuronal morphogenesis and migration during cortical development in the brain. The sequence is that of V-set and transmembrane domain-containing protein 5 (Vstm5) from Rattus norvegicus (Rat).